A 220-amino-acid chain; its full sequence is MTKQLVLFCDFDGTITENDNIIAIMKQFAPPEWEALKDDILAERISVQEGVGKMFSLLPSSLKGEIIDFLRRTTRLRAGFREFVAFTKERGIPLYIVSGGIDFFVYPLLEGLIEPERIFCNGSDFSGETIRITWPHACDGECQNGCGCCKPSLLRKLARPDGYHVVIGDSITDLAVAKQADYVMARDFLLQKCQELGLPHAPFATFFDVIDALQRMEVIV.

The protein belongs to the HAD-like hydrolase superfamily. MtnX family.

The catalysed reaction is 2-hydroxy-5-methylsulfanyl-3-oxopent-1-enyl phosphate + H2O = 1,2-dihydroxy-5-(methylsulfanyl)pent-1-en-3-one + phosphate. It participates in amino-acid biosynthesis; L-methionine biosynthesis via salvage pathway; L-methionine from S-methyl-5-thio-alpha-D-ribose 1-phosphate: step 4/6. Its function is as follows. Dephosphorylates 2-hydroxy-3-keto-5-methylthiopentenyl-1-phosphate (HK-MTPenyl-1-P) yielding 1,2-dihydroxy-3-keto-5-methylthiopentene (DHK-MTPene). This chain is 2-hydroxy-3-keto-5-methylthiopentenyl-1-phosphate phosphatase, found in Geobacillus kaustophilus (strain HTA426).